Here is a 426-residue protein sequence, read N- to C-terminus: Phosphomethylpyrimidine synthase (426 aa).

Substrate contacts are provided by residues Asn-65, Met-94, Tyr-123, His-162, 184–186, 225–228, and Glu-264; these read SRG and DGLR. A Zn(2+)-binding site is contributed by His-268. Position 291 (Tyr-291) interacts with substrate. His-332 serves as a coordination point for Zn(2+). Positions 409, 412, and 416 each coordinate [4Fe-4S] cluster.

This sequence belongs to the ThiC family. Requires [4Fe-4S] cluster as cofactor.

It catalyses the reaction 5-amino-1-(5-phospho-beta-D-ribosyl)imidazole + S-adenosyl-L-methionine = 4-amino-2-methyl-5-(phosphooxymethyl)pyrimidine + CO + 5'-deoxyadenosine + formate + L-methionine + 3 H(+). The protein operates within cofactor biosynthesis; thiamine diphosphate biosynthesis. Functionally, catalyzes the synthesis of the hydroxymethylpyrimidine phosphate (HMP-P) moiety of thiamine from aminoimidazole ribotide (AIR) in a radical S-adenosyl-L-methionine (SAM)-dependent reaction. The protein is Phosphomethylpyrimidine synthase of Thermodesulfovibrio yellowstonii (strain ATCC 51303 / DSM 11347 / YP87).